Consider the following 384-residue polypeptide: S-adenosylmethionine synthase (384 aa).

Residue His15 coordinates ATP. Residue Asp17 coordinates Mg(2+). Glu43 serves as a coordination point for K(+). Positions 56 and 99 each coordinate L-methionine. A flexible loop region spans residues 99-109 (QSADINQGVDR). ATP is bound by residues 164 to 166 (DAK), 230 to 231 (RF), Asp239, 245 to 246 (RK), Ala262, and Lys266. Position 239 (Asp239) interacts with L-methionine. Lys270 serves as a coordination point for L-methionine.

This sequence belongs to the AdoMet synthase family. As to quaternary structure, homotetramer; dimer of dimers. Mg(2+) is required as a cofactor. Requires K(+) as cofactor.

It localises to the cytoplasm. The enzyme catalyses L-methionine + ATP + H2O = S-adenosyl-L-methionine + phosphate + diphosphate. It functions in the pathway amino-acid biosynthesis; S-adenosyl-L-methionine biosynthesis; S-adenosyl-L-methionine from L-methionine: step 1/1. Its function is as follows. Catalyzes the formation of S-adenosylmethionine (AdoMet) from methionine and ATP. The overall synthetic reaction is composed of two sequential steps, AdoMet formation and the subsequent tripolyphosphate hydrolysis which occurs prior to release of AdoMet from the enzyme. The chain is S-adenosylmethionine synthase from Haemophilus influenzae (strain PittGG).